A 429-amino-acid polypeptide reads, in one-letter code: MSFNIIILKELGFSLVFSQSKCEYIIFQKEQCGLNDIYFGFIPRQSIYPTLNAAFVTLDSERNQGFIPFTLLIKKSNQQFVIPNSVFLIQVIKEPTINKPATLTSHIFLNSFNLNLQFSGIDCKYLNLYPNIKFLHICLITLLIPSGLDINFDHSMKDILYLDLIGQSKILYYSFSNLFTKLLRIKKMPQFIFRNSNFFLPILNKLSLSSINDFFVSSYQRAVYLRHFLITHYFTIKQTDYRILFYPTAYKSMQLYYLDMLFYRSLKPIVYTLYGIFIVICKTEALISIDVNSGSHSSRVSQNLSLHTNLIASKSIIKEIKLRNLAGVIVIDFVDMIHQKDQIHLLAFFRYLLNINSVMITLIQLSDIGLLELTRKRQDQSIYDVFQIGNISKSSFLYDRILSLNKNLFKTNLLINYTLFSNVKLIYNY.

The Mg(2+) site is built by Asp-290 and Asp-332.

It belongs to the RNase E/G family. It depends on Mg(2+) as a cofactor.

It is found in the plastid. The protein resides in the chloroplast stroma. Functionally, involved in intercistronic processing of primary transcripts from chloroplast operons. The endonucleolytic activity of the enzyme depends on the number of phosphates at the 5' end, is inhibited by structured RNA, and preferentially cleaves A/U-rich sequences. The protein is Ribonuclease E/G-like protein (rne) of Guillardia theta (Cryptophyte).